The chain runs to 162 residues: Ribosome-binding factor A (162 aa).

Positions V123 to D162 are disordered. Residues R125–P136 are compositionally biased toward low complexity.

Belongs to the RbfA family. Monomer. Binds 30S ribosomal subunits, but not 50S ribosomal subunits or 70S ribosomes.

Its subcellular location is the cytoplasm. Its function is as follows. One of several proteins that assist in the late maturation steps of the functional core of the 30S ribosomal subunit. Associates with free 30S ribosomal subunits (but not with 30S subunits that are part of 70S ribosomes or polysomes). Required for efficient processing of 16S rRNA. May interact with the 5'-terminal helix region of 16S rRNA. This is Ribosome-binding factor A from Rhodococcus opacus (strain B4).